Here is a 604-residue protein sequence, read N- to C-terminus: Inactive all-trans-retinol 13,14-reductase (604 aa).

The signal sequence occupies residues 1-17 (MWWILLFLEWFVDWARG).

It belongs to the carotenoid/retinoid oxidoreductase family. CrtISO subfamily.

The polypeptide is Inactive all-trans-retinol 13,14-reductase (retsatl) (Danio rerio (Zebrafish)).